The chain runs to 89 residues: UPF0250 protein CV_3095 (89 aa).

It belongs to the UPF0250 family.

The sequence is that of UPF0250 protein CV_3095 from Chromobacterium violaceum (strain ATCC 12472 / DSM 30191 / JCM 1249 / CCUG 213 / NBRC 12614 / NCIMB 9131 / NCTC 9757 / MK).